Here is a 375-residue protein sequence, read N- to C-terminus: Ribonuclease D (375 aa).

In terms of domain architecture, 3'-5' exonuclease spans 3-169 (YQMITTDDAL…LPITAKLMVE (167 aa)). The HRDC domain occupies 210–289 (RTRQLACLQL…EKAQTLPEDA (80 aa)).

This sequence belongs to the RNase D family. The cofactor is a divalent metal cation.

It localises to the cytoplasm. The catalysed reaction is Exonucleolytic cleavage that removes extra residues from the 3'-terminus of tRNA to produce 5'-mononucleotides.. In terms of biological role, exonuclease involved in the 3' processing of various precursor tRNAs. Initiates hydrolysis at the 3'-terminus of an RNA molecule and releases 5'-mononucleotides. This Escherichia coli (strain K12) protein is Ribonuclease D.